A 205-amino-acid chain; its full sequence is S-crystallin SL11 (205 aa).

The 79-residue stretch at 2–80 (PSYTLYYFNG…YLAREFGFYG (79 aa)) folds into the GST N-terminal domain. The 124-residue stretch at 82–205 (NNMDMFKVDC…YIKKRNNTAF (124 aa)) folds into the GST C-terminal domain.

The protein belongs to the GST superfamily. Lens.

S-crystallins are structural components of squids and octopi eye lens. Contains relatively little if any GST activity. This is S-crystallin SL11 from Nototodarus sloanii (Wellington flying squid).